Here is a 443-residue protein sequence, read N- to C-terminus: Serine--tRNA ligase (443 aa).

250-252 (TSE) is a binding site for L-serine. Position 281-283 (281-283 (RSE)) interacts with ATP. Residue E304 participates in L-serine binding. An ATP-binding site is contributed by 368 to 371 (EISS). Residue S403 coordinates L-serine.

It belongs to the class-II aminoacyl-tRNA synthetase family. Type-1 seryl-tRNA synthetase subfamily. In terms of assembly, homodimer. The tRNA molecule binds across the dimer.

Its subcellular location is the cytoplasm. It catalyses the reaction tRNA(Ser) + L-serine + ATP = L-seryl-tRNA(Ser) + AMP + diphosphate + H(+). The enzyme catalyses tRNA(Sec) + L-serine + ATP = L-seryl-tRNA(Sec) + AMP + diphosphate + H(+). Its pathway is aminoacyl-tRNA biosynthesis; selenocysteinyl-tRNA(Sec) biosynthesis; L-seryl-tRNA(Sec) from L-serine and tRNA(Sec): step 1/1. In terms of biological role, catalyzes the attachment of serine to tRNA(Ser). Is also able to aminoacylate tRNA(Sec) with serine, to form the misacylated tRNA L-seryl-tRNA(Sec), which will be further converted into selenocysteinyl-tRNA(Sec). In Variovorax paradoxus (strain S110), this protein is Serine--tRNA ligase.